Reading from the N-terminus, the 141-residue chain is Hemoglobin subunit alpha-A (141 aa).

The Globin domain maps to 1–141; it reads VLSAADKTNV…VSTVLTAKYR (141 aa). His58 provides a ligand contact to O2. Position 87 (His87) interacts with heme b.

It belongs to the globin family. In terms of assembly, heterotetramer of two alpha chains and two beta chains. Red blood cells.

Involved in oxygen transport from the lung to the various peripheral tissues. This chain is Hemoglobin subunit alpha-A (HBAA), found in Eudynamys scolopaceus (Western koel).